We begin with the raw amino-acid sequence, 929 residues long: Synaptopodin (929 aa).

Met1 is subject to N-acetylmethionine. Pro residues predominate over residues 1–12; that stretch reads MLGPHLPPPPLA. The disordered stretch occupies residues 1-260; the sequence is MLGPHLPPPP…EASLLRHLEK (260 aa). Basic and acidic residues-rich tracts occupy residues 60-69 and 91-110; these read GVSRSGDDSA and SREE…DWDV. Position 140 is a phosphoserine (Ser140). Residues 142-151 are compositionally biased toward basic and acidic residues; it reads TEKDLKEAKA. Residues 152 to 170 show a composition bias toward polar residues; it reads RSQQIAAQLTTPPSSNSRG. Ser207 is subject to Phosphoserine. Residues 224 to 234 are compositionally biased toward pro residues; sequence EPGPPRHPSPQ. Residue Ser263 is modified to Phosphoserine. The interval 285–389 is disordered; that stretch reads GLHLSQNREA…TLCADGQPQA (105 aa). The span at 317-332 shows a compositional bias: low complexity; the sequence is LASPSATLTTPTSNSS. The N-linked (GlcNAc...) asparagine glycan is linked to Asn330. A compositionally biased stretch (polar residues) spans 333 to 379; sequence HNPPATDVNQNPPATVVPQSLPLSSIQQNSSEAQLPSNGTGPASKPS. Phosphoserine is present on residues Ser501 and Ser525. Positions 509–558 are disordered; the sequence is FGEKAPAPQPPSLPDRSPRPQRHIMSRSPMVERRMMGQRSPASERRPLGN. Thr560 is subject to Phosphothreonine. The PPxY motif signature appears at 562-565; it reads PPTY. Ser580 carries the phosphoserine modification. A PPxY motif motif is present at residues 581–584; it reads PPSY. Disordered stretches follow at residues 589-610 and 630-726; these read PSSD…KTGI and KPKV…KGAE. A compositionally biased stretch (basic and acidic residues) spans 646-656; the sequence is ADEKRRQRDQG. Phosphoserine is present on residues Ser685, Ser702, and Tyr738. The segment covering 685–698 has biased composition (low complexity); that stretch reads SPAAAEEVVPEWAS. The segment at 740–763 is disordered; sequence IESSSHTPELARCPSPTMSLPSSW. Thr746 is modified (phosphothreonine). Residues Ser754, Ser758, and Ser779 each carry the phosphoserine modification. Thr783 is subject to Phosphothreonine. Phosphoserine occurs at positions 784, 804, 812, 826, 833, 854, 871, and 894. Positions 826 to 839 are enriched in low complexity; it reads KVSPRAASPAKPSS. A disordered region spans residues 826-916; the sequence is KVSPRAASPA…RPSFSTRNAG (91 aa). The span at 866 to 880 shows a compositional bias: polar residues; that stretch reads GLYTSPGQDSLQPTA.

Belongs to the synaptopodin family. As to quaternary structure, interacts with BAIAP1. Interacts with actin. Interacts (via PPxY motifs) with WWC1 (via WW domains). Post-translationally, O-glycosylated. Expressed in cerebral cortex.

The protein resides in the cytoplasm. It localises to the cytoskeleton. It is found in the cell junction. The protein localises to the tight junction. Its subcellular location is the perikaryon. The protein resides in the cell projection. It localises to the dendritic spine. It is found in the postsynaptic density. The protein localises to the synapse. Its subcellular location is the cytosol. Actin-associated protein that may play a role in modulating actin-based shape and motility of dendritic spines and renal podocyte foot processes. Seems to be essential for the formation of spine apparatuses in spines of telencephalic neurons, which is involved in synaptic plasticity. The protein is Synaptopodin (SYNPO) of Homo sapiens (Human).